Consider the following 179-residue polypeptide: Hypoxanthine-guanine phosphoribosyltransferase (179 aa).

Residues lysine 42 and glycine 43 each contribute to the diphosphate site. Mg(2+) is bound by residues glutamate 98 and aspartate 99. Glutamate 102 functions as the Proton acceptor in the catalytic mechanism. Residues lysine 130, 151–152 (FV), and aspartate 158 contribute to the GMP site. Arginine 164 serves as a coordination point for diphosphate.

This sequence belongs to the purine/pyrimidine phosphoribosyltransferase family. Requires Mg(2+) as cofactor.

It is found in the cytoplasm. It catalyses the reaction IMP + diphosphate = hypoxanthine + 5-phospho-alpha-D-ribose 1-diphosphate. The enzyme catalyses GMP + diphosphate = guanine + 5-phospho-alpha-D-ribose 1-diphosphate. The protein operates within purine metabolism; IMP biosynthesis via salvage pathway; IMP from hypoxanthine: step 1/1. It participates in purine metabolism; GMP biosynthesis via salvage pathway; GMP from guanine: step 1/1. In terms of biological role, purine salvage pathway enzyme that catalyzes the transfer of the ribosyl-5-phosphate group from 5-phospho-alpha-D-ribose 1-diphosphate (PRPP) to the N9 position of the 6-oxopurines hypoxanthine and guanine to form the corresponding ribonucleotides IMP (inosine 5'-monophosphate) and GMP (guanosine 5'-monophosphate), with the release of PPi. The polypeptide is Hypoxanthine-guanine phosphoribosyltransferase (hpt) (Staphylococcus aureus (strain COL)).